A 43-amino-acid chain; its full sequence is Bacteriocin leucocin-C (43 aa).

The cysteines at positions 9 and 14 are disulfide-linked.

It localises to the secreted. Its function is as follows. Inhibits a wide spectrum of lactic acid bacteria. The chain is Bacteriocin leucocin-C from Leuconostoc mesenteroides.